We begin with the raw amino-acid sequence, 258 residues long: Chaperone protein FaeE (258 aa).

The signal sequence occupies residues 1–34 (MSKRNAVTTFFTNRVTKALGMTLALMMTCQSAMA). The interval 239-258 (KKPAAPEAAKAEKADTAEQK) is disordered. Residues 247–258 (AKAEKADTAEQK) show a composition bias toward basic and acidic residues.

This sequence belongs to the periplasmic pilus chaperone family.

It localises to the periplasm. Functionally, mediates assembly of pili by forming soluble multimeric complexes with pili subunits as an intermediate step in the assembly process. This protein is involved in K88 pili assembly. Protects pilin protein from proteolytic degradation by DegP and from premature polymerization. This chain is Chaperone protein FaeE (faeE), found in Escherichia coli.